A 487-amino-acid polypeptide reads, in one-letter code: Betaine aldehyde dehydrogenase 1 (487 aa).

K(+) is bound by residues Ser26, Ile27, and Asp93. Residue 150-152 (GAW) coordinates NAD(+). Lys162 (charge relay system) is an active-site residue. NAD(+) is bound by residues 176–179 (KPSE) and 229–232 (SVPT). Leu244 serves as a coordination point for K(+). The Proton acceptor role is filled by Glu250. NAD(+) contacts are provided by Gly252, Cys284, and Glu384. Cys284 acts as the Nucleophile in catalysis. Cys284 carries the post-translational modification Cysteine sulfenic acid (-SOH). K(+)-binding residues include Lys454 and Gly457. The Charge relay system role is filled by Glu461.

This sequence belongs to the aldehyde dehydrogenase family. In terms of assembly, dimer of dimers. It depends on K(+) as a cofactor.

The enzyme catalyses betaine aldehyde + NAD(+) + H2O = glycine betaine + NADH + 2 H(+). Its pathway is amine and polyamine biosynthesis; betaine biosynthesis via choline pathway; betaine from betaine aldehyde: step 1/1. Involved in the biosynthesis of the osmoprotectant glycine betaine. Catalyzes the irreversible oxidation of betaine aldehyde to the corresponding acid. The polypeptide is Betaine aldehyde dehydrogenase 1 (Rhizobium meliloti (strain 1021) (Ensifer meliloti)).